Reading from the N-terminus, the 247-residue chain is Transmembrane protein 33 (247 aa).

Ala-2 is subject to N-acetylalanine. Residues 2–31 are Lumenal-facing; the sequence is ADTTPNGPQGAGAVQFMMTNKLDTAMWLSR. A helical transmembrane segment spans residues 32-52; it reads LFTVYCSALFVLPLLGLHEAA. Residues 53–100 lie on the Cytoplasmic side of the membrane; sequence SFYQRALLANALTSALRLHQRLPHFQLSRAFLAQALLEDSCHYLLYSL. A helical membrane pass occupies residues 101 to 121; it reads IFVNSYPVTMSIFPVLLFSLL. Residues 122–155 lie on the Lumenal side of the membrane; it reads HAATYTKKVLDAKGSNSLPLLRSFLDKLSTNQQN. Residues 156 to 176 traverse the membrane as a helical segment; sequence ILKFIACNEIFLMPATVFMLF. Residues 177–247 lie on the Cytoplasmic side of the membrane; the sequence is SGQGSLLQPF…FISRLAPTVA (71 aa).

The protein belongs to the PER33/POM33 family. Interacts with EIF2AK3. Interacts with RTN1, RTN2, RTN3, RTN4 and ARL6IP1. Interacts with RNF5. Interacts with RNF26. Interacts with PKD2.

The protein localises to the endoplasmic reticulum membrane. It localises to the melanosome. Its subcellular location is the nucleus envelope. Its function is as follows. Acts as a regulator of the tubular endoplasmic reticulum (ER) network by modulating intracellular calcium homeostasis. Mechanistically, stimulates PKD2 calcium-dependent activity. Suppresses the RTN3/4-induced formation of the ER tubules. Positively regulates PERK-mediated and IRE1-mediated unfolded protein response signaling. Plays an essential role in VEGF-mediated release of Ca(2+) from ER stores during angiogenesis. Also plays a role in the modulation of innate immune signaling through the cGAS-STING pathway by interacting with RNF26. Participates in lipid metabolism by acting as a downstream effector of the pyruvate kinase/PKM. Forms a complex with RNF5 to facilitate polyubiquitination and subsequent degradation of SCAP on the ER membrane. In Mus musculus (Mouse), this protein is Transmembrane protein 33 (Tmem33).